Here is a 338-residue protein sequence, read N- to C-terminus: Anthranilate phosphoribosyltransferase (338 aa).

Residues Gly78, 81 to 82 (GD), Ser86, 88 to 91 (NIST), 106 to 114 (KHGNRSITS), and Ser118 each bind 5-phospho-alpha-D-ribose 1-diphosphate. Gly78 contacts anthranilate. Ser90 is a binding site for Mg(2+). Residue Asn109 participates in anthranilate binding. Arg163 is a binding site for anthranilate. Residues Asp222 and Glu223 each contribute to the Mg(2+) site.

This sequence belongs to the anthranilate phosphoribosyltransferase family. Homodimer. It depends on Mg(2+) as a cofactor.

The catalysed reaction is N-(5-phospho-beta-D-ribosyl)anthranilate + diphosphate = 5-phospho-alpha-D-ribose 1-diphosphate + anthranilate. It functions in the pathway amino-acid biosynthesis; L-tryptophan biosynthesis; L-tryptophan from chorismate: step 2/5. Catalyzes the transfer of the phosphoribosyl group of 5-phosphorylribose-1-pyrophosphate (PRPP) to anthranilate to yield N-(5'-phosphoribosyl)-anthranilate (PRA). This is Anthranilate phosphoribosyltransferase from Staphylococcus haemolyticus (strain JCSC1435).